The sequence spans 220 residues: 7-carboxy-7-deazaguanine synthase (220 aa).

Substrate-binding positions include 16–18 (IQG) and Arg-31. Residues 22–215 (FAGWPCAFVR…LQLHKYIWNP (194 aa)) form the Radical SAM core domain. [4Fe-4S] cluster is bound by residues Cys-35, Cys-39, and Cys-42. Residue Thr-44 coordinates Mg(2+). Thr-74 contributes to the substrate binding site. Gly-76 provides a ligand contact to S-adenosyl-L-methionine.

This sequence belongs to the radical SAM superfamily. 7-carboxy-7-deazaguanine synthase family. In terms of assembly, homodimer. [4Fe-4S] cluster is required as a cofactor. It depends on S-adenosyl-L-methionine as a cofactor. The cofactor is Mg(2+).

The catalysed reaction is 6-carboxy-5,6,7,8-tetrahydropterin + H(+) = 7-carboxy-7-deazaguanine + NH4(+). The protein operates within purine metabolism; 7-cyano-7-deazaguanine biosynthesis. Its function is as follows. Catalyzes the complex heterocyclic radical-mediated conversion of 6-carboxy-5,6,7,8-tetrahydropterin (CPH4) to 7-carboxy-7-deazaguanine (CDG), a step common to the biosynthetic pathways of all 7-deazapurine-containing compounds. The sequence is that of 7-carboxy-7-deazaguanine synthase from Chlorobaculum tepidum (strain ATCC 49652 / DSM 12025 / NBRC 103806 / TLS) (Chlorobium tepidum).